The following is a 355-amino-acid chain: Guanine nucleotide-binding protein G(i) subunit alpha-2 (355 aa).

Glycine 2 is lipidated: N-myristoyl glycine. Cysteine 3 carries S-palmitoyl cysteine lipidation. The region spanning arginine 32 to phenylalanine 355 is the G-alpha domain. Positions lysine 35 to threonine 48 are G1 motif. Residues glycine 40 to serine 47, leucine 176 to threonine 182, aspartate 201 to glutamine 205, asparagine 270 to aspartate 273, and alanine 327 contribute to the GTP site. Serine 47 and threonine 182 together coordinate Mg(2+). Residues aspartate 174 to threonine 182 are G2 motif. The tract at residues phenylalanine 197–arginine 206 is G3 motif. The G4 motif stretch occupies residues isoleucine 266 to aspartate 273. The interval threonine 325–threonine 330 is G5 motif.

Belongs to the G-alpha family. G(i/o/t/z) subfamily. In terms of assembly, g proteins are composed of 3 units; alpha, beta and gamma. The alpha chain contains the guanine nucleotide binding site. In this context, interacts with GNB2. Interacts with UNC5B. Interacts with GPSM1. Interacts with RGS12 and RGS14. Interacts (inactive GDP-bound form) with NUCB1 (via GBA motif); the interaction leads to activation of GNAI3. Interacts (inactive GDP-bound form) with CCDC88C/DAPLE (via GBA motif). Interacts (inactive GDP-bound form) with CCDC8A/GIV (via GBA motif). Interacts with CXCR1 and CXCR2.

The protein resides in the cytoplasm. Its subcellular location is the cytoskeleton. It is found in the microtubule organizing center. It localises to the centrosome. The protein localises to the cell membrane. The protein resides in the membrane. Guanine nucleotide-binding proteins (G proteins) are involved as modulators or transducers in various transmembrane signaling systems. The G(i) proteins are involved in hormonal regulation of adenylate cyclase: they inhibit the cyclase in response to beta-adrenergic stimuli. May play a role in cell division. The protein is Guanine nucleotide-binding protein G(i) subunit alpha-2 (Gnai2) of Mus musculus (Mouse).